A 76-amino-acid polypeptide reads, in one-letter code: Spermatid nuclear transition protein 3 (76 aa).

Positions 1 to 11 are enriched in polar residues; that stretch reads AKVTEKSWQPQ. Disordered regions lie at residues 1 to 34 and 56 to 76; these read AKVT…GKVR and VITT…ETIP. Basic residues predominate over residues 16–34; it reads KRWKKRKTPSQPRSRGKVR.

The protein localises to the nucleus. Its subcellular location is the chromosome. Involved in nuclear basic protein transition: histones are replaced by spermatid specific proteins which are themselves replaced by protamines in late spermatids. This chain is Spermatid nuclear transition protein 3 (TNP3), found in Sus scrofa (Pig).